Reading from the N-terminus, the 122-residue chain is Large ribosomal subunit protein uL14 (122 aa).

Belongs to the universal ribosomal protein uL14 family. In terms of assembly, part of the 50S ribosomal subunit. Forms a cluster with proteins L3 and L19. In the 70S ribosome, L14 and L19 interact and together make contacts with the 16S rRNA in bridges B5 and B8.

Binds to 23S rRNA. Forms part of two intersubunit bridges in the 70S ribosome. The protein is Large ribosomal subunit protein uL14 of Thermotoga petrophila (strain ATCC BAA-488 / DSM 13995 / JCM 10881 / RKU-1).